We begin with the raw amino-acid sequence, 3227 residues long: E3 ubiquitin-protein ligase ptr1 (3227 aa).

Disordered regions lie at residues 1806–1836 (SGAA…PPDL), 1869–1894 (MEFE…VMYS), 1908–1929 (QDAS…GDVI), and 2577–2607 (ATTG…KDKK). Residues 1811 to 1823 (DSMGDQSLSSSSE) are compositionally biased toward low complexity. Residues 1883–1894 (VSEDDADDVMYS) are compositionally biased toward acidic residues. Positions 2577-2601 (ATTGYTNDQDSRGSTVPKQDPGTTA) are enriched in polar residues. Positions 2891-3227 (DADEVKFSKL…NEGSEGFGFA (337 aa)) constitute an HECT domain. The active-site Glycyl thioester intermediate is Cys-3194.

It belongs to the UPL family. TOM1/PTR1 subfamily.

It localises to the nucleus. It carries out the reaction S-ubiquitinyl-[E2 ubiquitin-conjugating enzyme]-L-cysteine + [acceptor protein]-L-lysine = [E2 ubiquitin-conjugating enzyme]-L-cysteine + N(6)-ubiquitinyl-[acceptor protein]-L-lysine.. The protein operates within protein modification; protein ubiquitination. Functionally, probable ubiquitin ligase protein involved in mRNA export. E3 ubiquitin ligase proteins mediate ubiquitination and subsequent proteasomal degradation of target proteins. Probably participates in mRNA export from the nucleus by regulating the transport of hnRNP proteins such as rae1. In Schizosaccharomyces pombe (strain 972 / ATCC 24843) (Fission yeast), this protein is E3 ubiquitin-protein ligase ptr1 (ptr1).